The chain runs to 768 residues: Phosphoribosylformylglycinamidine synthase subunit PurL (768 aa).

Residue His46 is part of the active site. The ATP site is built by Tyr49 and Lys88. A Mg(2+)-binding site is contributed by Glu90. Substrate-binding positions include 91 to 94 (SHNH) and Arg113. His92 functions as the Proton acceptor in the catalytic mechanism. Residue Asp114 coordinates Mg(2+). Gln237 serves as a coordination point for substrate. Asp265 is a binding site for Mg(2+). Substrate is bound at residue 309–311 (ESQ). 2 residues coordinate ATP: Asp514 and Gly551. Asn552 provides a ligand contact to Mg(2+). Residue Ser554 participates in substrate binding.

Belongs to the FGAMS family. As to quaternary structure, monomer. Part of the FGAM synthase complex composed of 1 PurL, 1 PurQ and 2 PurS subunits.

The protein localises to the cytoplasm. The catalysed reaction is N(2)-formyl-N(1)-(5-phospho-beta-D-ribosyl)glycinamide + L-glutamine + ATP + H2O = 2-formamido-N(1)-(5-O-phospho-beta-D-ribosyl)acetamidine + L-glutamate + ADP + phosphate + H(+). Its pathway is purine metabolism; IMP biosynthesis via de novo pathway; 5-amino-1-(5-phospho-D-ribosyl)imidazole from N(2)-formyl-N(1)-(5-phospho-D-ribosyl)glycinamide: step 1/2. Part of the phosphoribosylformylglycinamidine synthase complex involved in the purines biosynthetic pathway. Catalyzes the ATP-dependent conversion of formylglycinamide ribonucleotide (FGAR) and glutamine to yield formylglycinamidine ribonucleotide (FGAM) and glutamate. The FGAM synthase complex is composed of three subunits. PurQ produces an ammonia molecule by converting glutamine to glutamate. PurL transfers the ammonia molecule to FGAR to form FGAM in an ATP-dependent manner. PurS interacts with PurQ and PurL and is thought to assist in the transfer of the ammonia molecule from PurQ to PurL. The sequence is that of Phosphoribosylformylglycinamidine synthase subunit PurL from Synechocystis sp. (strain ATCC 27184 / PCC 6803 / Kazusa).